The following is a 41-amino-acid chain: MTQIKVPTALIASVHGEGQHLFEPMAARCTCTTIISSSSTF.

The propeptide occupies 1 to 27 (MTQIKVPTALIASVHGEGQHLFEPMAA). Residue Arg-28 is modified to N2,N2-dimethylarginine. The segment at residues 28 to 29 (RC) is a cross-link (thiazole-4-carboxylic acid (Arg-Cys)). 2 consecutive cross-links (5-methyloxazole-4-carboxylic acid (Cys-Thr)) follow at residues 29–30 (CT) and 31–32 (CT). Residues 30–31 (TC) constitute a cross-link (thiazole-4-carboxylic acid (Thr-Cys)). Positions 32 to 33 (TT) form a cross-link, 5-methyloxazole-4-carboxylic acid (Thr-Thr). Residues 35–36 (IS) constitute a cross-link (oxazole-4-carboxylic acid (Ile-Ser)). 3 consecutive cross-links (oxazole-4-carboxylic acid (Ser-Ser)) follow at residues 36–37 (SS), 37–38 (SS), and 38–39 (SS). Residues 39 to 40 (ST) constitute a cross-link (5-methyloxazoline-4-carboxylic acid (Ser-Thr)).

Post-translationally, maturation of thiazole and oxazole containing antibiotics involves the enzymatic condensation of a Cys, Ser or Thr with the alpha-carbonyl of the preceding amino acid to form a thioether or ether bond, then dehydration to form a double bond with the alpha-amino nitrogen. Thiazoline or oxazoline ring are dehydrogenated to form thiazole or oxazole rings. In terms of processing, 2 forms exist: plantazolicin A and plantazolicin B. The structural difference between them is a dimethylation at Arg-28 in plantazolicin A.

It is found in the secreted. It localises to the cell wall. Its function is as follows. Peptide antibiotic inhibiting growth of Gram-positive bacteria in the dimethylated form plantazolicin A. The desmethyl form plantazolicin B has no antibiotic activity. The mode of action appears to be disruption of cell walls and lysis of cells. Inhibits B.subtilis strain HB0042, B.megaterium strain 7A1 and B.anthracis (MIC=2-4 ug/ml). Weakly inhibits Gram-positive bacteria B.brevis strain ATCC 8246, B.subtilis strain 168, B.cereus strain ATCC 14579 and strain CU1065, B.licheniformis strain ATCC 9789, M.luteus, B.sphaericus, P.granivorans and S.pyogenes (MIC=128 ug/ml). Does not inhibit B.pumilus, P.polymyxa, Arthrobacter sp., S.aureus, vancomycin-resistant E.faecalis, L.monocytogenes, methicillin-resistant S.aureus or Gram-negative bacteria E.coli strain K12, K.terrigena, Pseudomonas sp. and E.carotovora. The protein is Plantazolicin of Bacillus velezensis (strain DSM 23117 / BGSC 10A6 / LMG 26770 / FZB42) (Bacillus amyloliquefaciens subsp. plantarum).